The sequence spans 420 residues: Adenylosuccinate synthetase (420 aa).

Residues 12–18 (GDEGKGK) and 40–42 (GHT) contribute to the GTP site. Asp13 acts as the Proton acceptor in catalysis. Mg(2+) is bound by residues Asp13 and Gly40. IMP-binding positions include 13–16 (DEGK), 38–41 (NAGH), Thr128, Arg142, Gln221, Thr236, and Arg299. The active-site Proton donor is the His41. Position 295–301 (295–301 (ATTGRPR)) interacts with substrate. Residues Arg301, 327 to 329 (KAD), and 399 to 401 (SYG) contribute to the GTP site.

The protein belongs to the adenylosuccinate synthetase family. As to quaternary structure, homodimer. Mg(2+) serves as cofactor.

It is found in the cytoplasm. The catalysed reaction is IMP + L-aspartate + GTP = N(6)-(1,2-dicarboxyethyl)-AMP + GDP + phosphate + 2 H(+). Its pathway is purine metabolism; AMP biosynthesis via de novo pathway; AMP from IMP: step 1/2. Plays an important role in the de novo pathway of purine nucleotide biosynthesis. Catalyzes the first committed step in the biosynthesis of AMP from IMP. This is Adenylosuccinate synthetase from Petrotoga mobilis (strain DSM 10674 / SJ95).